The primary structure comprises 471 residues: V-type ATP synthase beta chain (471 aa).

Belongs to the ATPase alpha/beta chains family.

In terms of biological role, produces ATP from ADP in the presence of a proton gradient across the membrane. The V-type beta chain is a regulatory subunit. This Deinococcus deserti (strain DSM 17065 / CIP 109153 / LMG 22923 / VCD115) protein is V-type ATP synthase beta chain.